Consider the following 793-residue polypeptide: ABC transporter G family member 1 (793 aa).

The span at 1–20 shows a compositional bias: low complexity; sequence MDSNNNNNNENEAFSGASES. A disordered region spans residues 1 to 96; it reads MDSNNNNNNE…NNNQNNNIIN (96 aa). Basic and acidic residues predominate over residues 21 to 37; the sequence is SEFRKIVEENENEREFE. A compositionally biased stretch (polar residues) spans 59–68; that stretch reads ETINPNISLD. Residues 67-102 adopt a coiled-coil conformation; it reads LDNNNNNNQNNQNNQNNNNNNNNQNNNIINNLNKKN. The span at 69–96 shows a compositional bias: low complexity; it reads NNNNNNQNNQNNQNNNNNNNNQNNNIIN. Positions 123–364 constitute an ABC transporter domain; it reads VQITEKGKKK…FNANGYHCSE (242 aa). 156 to 163 provides a ligand contact to ATP; that stretch reads GPSGAGKT. Residues 382-398 show a composition bias toward acidic residues; sequence DQADSDDDDYNDEEEEI. Positions 382–457 are disordered; it reads DQADSDDDDY…QSTDGRARRR (76 aa). Residues 399-413 are compositionally biased toward gly residues; that stretch reads GGGGGGSGGGAGGIE. Over residues 421-437 the composition is skewed to polar residues; it reads PTMNGSAVDNIKNNELK. Residues 438 to 448 are compositionally biased toward low complexity; it reads QQQQQQQQQQQ. Residues 527-785 form the ABC transmembrane type-2 domain; sequence MAFKVNLIQA…VLTFLVLKLK (259 aa). Transmembrane regions (helical) follow at residues 533-553, 563-583, 610-630, 647-667, 674-694, 701-721, and 764-784; these read LIQAIFQGLLCGIVYYQLGLG, VVAFIIMGVSFPAVMSTIHVF, FMDACIAVLLPMVTATIVYWM, FVLMLVLASQTCLSLGVLISS, VGTAVAPLIVILFFLFSGFFI, GWLVWFPYISFFRYMIEAAVI, and VWILVLYIIGFRVLTFLVLKL.

This sequence belongs to the ABC transporter superfamily. ABCG family.

It localises to the membrane. The sequence is that of ABC transporter G family member 1 (abcG1) from Dictyostelium discoideum (Social amoeba).